Here is a 209-residue protein sequence, read N- to C-terminus: MGAGSSKPEASAGSKHIFESNSPIQFSSNLVDGLQSNTETDSARAKSLELEIQNRVAKELERLRAREQQTLAEIEKRLSEAKDTGSFASAPSAPAVTHYPAGSLDLDAPRIPFAGREYAPPPPAAVEVAAVNKELNRESVNSEIEELRVKLEGRKKLAELDEGVAKAQKDVVSCLRLNDRRPLDCWKEVAEFKKEVARLEEGFVDRIVG.

Coiled coils occupy residues 48–86 (LELEIQNRVAKELERLRAREQQTLAEIEKRLSEAKDTGS) and 127–156 (EVAAVNKELNRESVNSEIEELRVKLEGRKK).

The protein belongs to the MICOS complex subunit Mic19 family. As to quaternary structure, component of the mitochondrial contact site and cristae organizing system (MICOS) complex.

It is found in the mitochondrion inner membrane. Its function is as follows. Component of the MICOS complex, a large protein complex of the mitochondrial inner membrane that plays crucial roles in the maintenance of crista junctions, inner membrane architecture, and formation of contact sites to the outer membrane. Involved in osmoadaptation. In Emericella nidulans (strain FGSC A4 / ATCC 38163 / CBS 112.46 / NRRL 194 / M139) (Aspergillus nidulans), this protein is MICOS complex subunit mic19.